We begin with the raw amino-acid sequence, 514 residues long: GTPase-activating protein gyp1 (514 aa).

2 disordered regions span residues 17 to 65 and 130 to 164; these read LWNG…QPPK and LPRMARSTTPNSSSRSLFPQNGVDTTTSRQKLHSS. Polar residues-rich tracts occupy residues 18-28 and 135-158; these read WNGSSSATSDP and RSTTPNSSSRSLFPQNGVDTTTSR. Positions 216–443 constitute a Rab-GAP TBC domain; the sequence is GIPSEHRPIV…RMWDTYMAEG (228 aa).

It is found in the golgi apparatus. Its subcellular location is the golgi stack. The protein localises to the cytoplasm. The protein resides in the nucleus. In terms of biological role, stimulates specifically the GTPase activity of ypt1. Functions on the Golgi as a negative regulator of ypt1. The chain is GTPase-activating protein gyp1 from Schizosaccharomyces pombe (strain 972 / ATCC 24843) (Fission yeast).